The chain runs to 2258 residues: Genome polyprotein 1 (2258 aa).

Residues 439-597 (SMAQEAKQWS…AVRRYEIKTV (159 aa)) enclose the Helicase ATP-binding domain. 487-494 (RAATVNVT) contributes to the ATP binding site. The Helicase C-terminal domain occupies 612–778 (DKENSLYVLQ…GVQFYINEHF (167 aa)). O-(5'-phospho-RNA)-tyrosine is present on Tyr1141. One can recognise a Peptidase C4 domain in the interval 1257–1476 (ATLEGMTMKP…TKPRNMQSAP (220 aa)). Catalysis depends on for nuclear inclusion protein A activity residues His1302, Asp1338, and Cys1405. Positions 1745-1869 (WTHGSGDGSR…AMSPSFMVKF (125 aa)) constitute a RdRp catalytic domain. 2 disordered regions span residues 2027–2047 (NMAA…RGTS) and 2233–2258 (TSEQ…ALLR). Residues 2242 to 2258 (TETRRRNDYDGHEALLR) show a composition bias toward basic and acidic residues.

This sequence belongs to the bymoviruses polyprotein 1 family. VPg is uridylylated by the polymerase and is covalently attached to the 5'-end of the genomic RNA. This uridylylated form acts as a nucleotide-peptide primer for the polymerase. In terms of processing, the viral RNA1 of bymoviruses is expressed as a single polyprotein which undergoes post-translational proteolytic processing by the main proteinase NIa-pro resulting in the production of at least eight individual proteins.

It localises to the host cytoplasmic vesicle. It is found in the virion. The enzyme catalyses RNA(n) + a ribonucleoside 5'-triphosphate = RNA(n+1) + diphosphate. It catalyses the reaction Hydrolyzes glutaminyl bonds, and activity is further restricted by preferences for the amino acids in P6 - P1' that vary with the species of potyvirus, e.g. Glu-Xaa-Xaa-Tyr-Xaa-Gln-|-(Ser or Gly) for the enzyme from tobacco etch virus. The natural substrate is the viral polyprotein, but other proteins and oligopeptides containing the appropriate consensus sequence are also cleaved.. Indispensable for virus replication. Its function is as follows. Mediates the cap-independent, EIF4E-dependent translation of viral genomic RNAs. Binds to the cap-binding site of host EIF4E and thus interferes with the host EIF4E-dependent mRNA export and translation. VPg-RNA directly binds EIF4E and is a template for transcription. Also forms trimeric complexes with EIF4E-EIF4G, which are templates for translation. Functionally, has RNA-binding and proteolytic activities. In terms of biological role, an RNA-dependent RNA polymerase that plays an essential role in the virus replication. The chain is Genome polyprotein 1 from Barley mild mosaic virus (strain Na1) (BaMMV).